The following is a 147-amino-acid chain: uncharacterized protein (147 aa).

2 helical membrane-spanning segments follow: residues 21–41 (LMLW…IVFV) and 67–87 (ALFG…SIPL).

It is found in the cell membrane. This is an uncharacterized protein from Ureaplasma parvum serovar 3 (strain ATCC 700970).